We begin with the raw amino-acid sequence, 379 residues long: Lipoyl synthase, mitochondrial (379 aa).

7 residues coordinate [4Fe-4S] cluster: Cys-94, Cys-99, Cys-105, Cys-126, Cys-130, Cys-133, and Ser-342. Residues 109 to 331 (GEDNGAATAT…EKEAMSMGFL (223 aa)) enclose the Radical SAM core domain.

This sequence belongs to the radical SAM superfamily. Lipoyl synthase family. Requires [4Fe-4S] cluster as cofactor.

It is found in the mitochondrion. It carries out the reaction [[Fe-S] cluster scaffold protein carrying a second [4Fe-4S](2+) cluster] + N(6)-octanoyl-L-lysyl-[protein] + 2 oxidized [2Fe-2S]-[ferredoxin] + 2 S-adenosyl-L-methionine + 4 H(+) = [[Fe-S] cluster scaffold protein] + N(6)-[(R)-dihydrolipoyl]-L-lysyl-[protein] + 4 Fe(3+) + 2 hydrogen sulfide + 2 5'-deoxyadenosine + 2 L-methionine + 2 reduced [2Fe-2S]-[ferredoxin]. Its pathway is protein modification; protein lipoylation via endogenous pathway; protein N(6)-(lipoyl)lysine from octanoyl-[acyl-carrier-protein]: step 2/2. In terms of biological role, catalyzes the radical-mediated insertion of two sulfur atoms into the C-6 and C-8 positions of the octanoyl moiety bound to the lipoyl domains of lipoate-dependent enzymes, thereby converting the octanoylated domains into lipoylated derivatives. This is Lipoyl synthase, mitochondrial from Leishmania braziliensis.